Reading from the N-terminus, the 264-residue chain is 5'-nucleotidase SurE (264 aa).

A divalent metal cation contacts are provided by D10, D11, S43, and N99.

This sequence belongs to the SurE nucleotidase family. A divalent metal cation serves as cofactor.

It is found in the cytoplasm. It catalyses the reaction a ribonucleoside 5'-phosphate + H2O = a ribonucleoside + phosphate. Functionally, nucleotidase that shows phosphatase activity on nucleoside 5'-monophosphates. This is 5'-nucleotidase SurE from Methanococcus maripaludis (strain C5 / ATCC BAA-1333).